We begin with the raw amino-acid sequence, 433 residues long: Protein FAM98B (433 aa).

The tract at residues 303 to 433 (GRVPDRGGRP…GGGGGGYRRY (131 aa)) is disordered. Residues 305 to 314 (VPDRGGRPNE) show a composition bias toward basic and acidic residues. Over residues 331 to 433 (GGGGRGGWGG…GGGGGGYRRY (103 aa)) the composition is skewed to gly residues.

This sequence belongs to the FAM98 family. As to quaternary structure, homodimer. Component of the tRNA-splicing ligase complex. Interacts with FAM98A. Expressed strongly in colorectal cancer tissues compared to wild-type colon samples (at protein level). Expressed strongly in colorectal cancer tissues compared to wild-type colon samples.

Its subcellular location is the nucleus. It is found in the cytoplasm. Its function is as follows. Positively stimulates PRMT1-induced protein arginine dimethylated arginine methylation. This chain is Protein FAM98B (FAM98B), found in Homo sapiens (Human).